Reading from the N-terminus, the 69-residue chain is uncharacterized protein (69 aa).

The Cytoplasmic segment spans residues 1–15 (MLLYIVIIVACIISK). Residues 16–36 (LVPNEYWAIHLFFIIMIFMVY) form a helical membrane-spanning segment. Residues 37-69 (MYEKLDIHQKYQFWNYTMSGLSGHNVQVICKCY) lie on the Extracellular side of the membrane. Asn51 carries N-linked (GlcNAc...) asparagine; by host glycosylation.

The protein belongs to the asfivirus X69R family.

It is found in the host membrane. This is an uncharacterized protein from Ornithodoros (relapsing fever ticks).